Reading from the N-terminus, the 78-residue chain is Large ribosomal subunit protein bL28 (78 aa).

Belongs to the bacterial ribosomal protein bL28 family.

The polypeptide is Large ribosomal subunit protein bL28 (Prochlorococcus marinus (strain MIT 9515)).